The sequence spans 67 residues: DNA gyrase inhibitor YacG (67 aa).

Zn(2+) contacts are provided by C10, C13, C29, and C33. A compositionally biased stretch (basic and acidic residues) spans 44-57 (EEKRIPSSGDRSDT). Residues 44–67 (EEKRIPSSGDRSDTDGWSEEENQP) are disordered.

Belongs to the DNA gyrase inhibitor YacG family. As to quaternary structure, interacts with GyrB. Zn(2+) serves as cofactor.

In terms of biological role, inhibits all the catalytic activities of DNA gyrase by preventing its interaction with DNA. Acts by binding directly to the C-terminal domain of GyrB, which probably disrupts DNA binding by the gyrase. The chain is DNA gyrase inhibitor YacG from Cronobacter sakazakii (strain ATCC BAA-894) (Enterobacter sakazakii).